A 322-amino-acid polypeptide reads, in one-letter code: Zinc finger C2HC domain-containing protein zchc-1A (322 aa).

2 consecutive C2HC/C3H-type zinc fingers follow at residues 9-38 (PTFPCPICDRRFIKSSLEKHESACRKLASL) and 119-148 (DYVQCEYCSRNFNAAAAERHIPFCREQATR). 8 residues coordinate Zn(2+): Cys-13, Cys-16, His-28, Cys-32, Cys-123, Cys-126, His-138, and Cys-142. Positions 150–159 (QGGNLKSSGG) are enriched in polar residues. Residues 150–322 (QGGNLKSSGG…SRNNSRSRIF (173 aa)) form a disordered region. Over residues 174 to 220 (NEGKKQESSSRNGSAERKPTTRGRDGSLLRARRDDSNDITSRRKSLD) the composition is skewed to basic and acidic residues. Polar residues-rich tracts occupy residues 221–238 (TRTSLTTGQASNRHTSLS) and 264–274 (LQQSSTPQQRL). Residues 276–295 (TPASTTTTASRSGSRTSSRA) show a composition bias toward low complexity. Positions 296 to 305 (CPRDDSRDSR) are enriched in basic and acidic residues. The span at 311–322 (NNSRNNSRSRIF) shows a compositional bias: low complexity.

This sequence belongs to the ZC2HC1 family. The cofactor is Zn(2+).

The chain is Zinc finger C2HC domain-containing protein zchc-1A from Caenorhabditis elegans.